Consider the following 358-residue polypeptide: Hydroxyproline O-arabinosyltransferase 2 (358 aa).

The helical; Signal-anchor transmembrane segment at 7 to 26 (YFFPILMTLSLFLIIRYNYI) threads the bilayer.

Ubiquitous.

The protein localises to the golgi apparatus. It localises to the cis-Golgi network membrane. It catalyses the reaction trans-4-hydroxy-L-prolyl-[protein] + UDP-beta-L-arabinofuranose = O-(beta-L-arabinofuranosyl)-trans-4-hydroxy-L-prolyl-[protein] + UDP + H(+). In terms of biological role, glycosyltransferase involved in the O-arabinosylation of several proteins including extensins and small signaling peptides. Catalyzes the transfer of the initial L-arabinose to the hydroxyl group of Hyp residues. Contributes redundantly with HPAT1 and HPAT3 to arabinosylation of EXT3. This Arabidopsis thaliana (Mouse-ear cress) protein is Hydroxyproline O-arabinosyltransferase 2.